The sequence spans 242 residues: Venom nerve growth factor 1 (242 aa).

A signal peptide spans 1-18; it reads MSMLCYTLIIAFLIGIWA. The propeptide occupies 19-125; it reads APKSEDNVPL…ALNRNIRSKR (107 aa). A disordered region spans residues 26-69; it reads VPLGSPATSDLSDTSCAQTHKALKTSRNTDQRHPAPKKAEDQEL. Polar residues predominate over residues 31–43; the sequence is PATSDLSDTSCAQ. Over residues 52–66 the composition is skewed to basic and acidic residues; that stretch reads RNTDQRHPAPKKAED. 3 cysteine pairs are disulfide-bonded: Cys139/Cys203, Cys181/Cys231, and Cys191/Cys233. A glycan (N-linked (GlcNAc...) asparagine) is linked at Asn147.

This sequence belongs to the NGF-beta family. Homodimer; non-covalently linked. In terms of tissue distribution, expressed by the venom gland.

It is found in the secreted. Functionally, nerve growth factor is important for the development and maintenance of the sympathetic and sensory nervous systems. It stimulates division and differentiation of sympathetic and embryonic sensory neurons as well as basal forebrain cholinergic neurons in the brain. Its relevance in the snake venom is not clear. However, it has been shown to inhibit metalloproteinase-dependent proteolysis of platelet glycoprotein Ib alpha, suggesting a metalloproteinase inhibition to prevent metalloprotease autodigestion and/or protection against prey proteases. Binds a lipid between the two protein chains in the homodimer. The lipid-bound form promotes histamine relase from mouse mast cells, contrary to the lipid-free form. This chain is Venom nerve growth factor 1, found in Demansia vestigiata (Lesser black whip snake).